Here is a 519-residue protein sequence, read N- to C-terminus: Cytochrome P450 monooxygenase apdE (519 aa).

Residues 27 to 47 (FVFFAFVVYSCFTIAVGWVVY) traverse the membrane as a helical segment. 2 N-linked (GlcNAc...) asparagine glycosylation sites follow: asparagine 327 and asparagine 379. Cysteine 466 serves as a coordination point for heme. N-linked (GlcNAc...) asparagine glycosylation occurs at asparagine 508.

The protein belongs to the cytochrome P450 family. It depends on heme as a cofactor.

The protein resides in the membrane. It functions in the pathway secondary metabolite biosynthesis. Functionally, cytochrome P450 monooxygenase; part of the gene cluster that mediates the biosynthesis of aspyridones. The polyketide-amino acid backbone preaspyridone A is first assembled by the PKS-NRPS hybrid apdA. The assembly of preaspyridone A is initiated by loading of malonyl-CoA onto apdA, followed by decarboxylation to yield the acetyl starter unit. The growing polyketide chain then elongates into a tetraketide. The adpA PKS module catalyzes three Claisen condensations, as well as beta-keto processing and methylation. Alpha-methylation step during polyketide synthesis is a prerequisite and a key checkpoint for chain transfer between PKS and NRPS modules. The downstream NRPS module contains the condensation (C), adenylation (A), and thiolation (T) domains and catalyzes the incorporation of tyrosine via the formation of the L-tyrosinyl-thioester and the amide linkage between L-tyrosinyl-thioester and the tetraketide. The bimodular assembly line is terminated with a reductase (R) domain that facilitates formation and release of the tetramic acid product. Because apdA lacks a designated enoylreductase (ER) domain, the required activity is provided the enoyl reductase apdC. ApdC appears to operate with different stereoselectivity in different PKS cycle. Combined with apdC, apdA is proposed to synthesize preaspyridone A via about 20 enzymatic steps. A number of oxidative steps performed successively by the cytochrome P450 monooxygenases apdE and apdB are required for the conversion of preaspyridone A to aspyridone A. The cytochrome P450 monooxygenase apdE is responsible for the oxidative dephenylation of preaspyridone A. Finally, the predicted FAD-dependent monooxygenase apdD and the acyl-CoA dehydrogenase apdG may be involved in the transformation of aspyridone A into aspyridone B. This Emericella nidulans (strain FGSC A4 / ATCC 38163 / CBS 112.46 / NRRL 194 / M139) (Aspergillus nidulans) protein is Cytochrome P450 monooxygenase apdE.